Reading from the N-terminus, the 338-residue chain is 5-dehydro-2-deoxygluconokinase (338 aa).

It belongs to the carbohydrate kinase PfkB family.

It catalyses the reaction 5-dehydro-2-deoxy-D-gluconate + ATP = 6-phospho-5-dehydro-2-deoxy-D-gluconate + ADP + H(+). It functions in the pathway polyol metabolism; myo-inositol degradation into acetyl-CoA; acetyl-CoA from myo-inositol: step 5/7. Catalyzes the phosphorylation of 5-dehydro-2-deoxy-D-gluconate (2-deoxy-5-keto-D-gluconate or DKG) to 6-phospho-5-dehydro-2-deoxy-D-gluconate (DKGP). The chain is 5-dehydro-2-deoxygluconokinase from Mesomycoplasma hyopneumoniae (strain 232) (Mycoplasma hyopneumoniae).